Consider the following 146-residue polypeptide: Arginine vasopressin-induced protein 1 (146 aa).

Disordered regions lie at residues 1–31 (MGTP…RKQA) and 80–146 (RRKR…QIRH). Positions 80-92 (RRKRPPRQNHCSR) are enriched in basic residues. Residues 106–123 (QASTTDTASSEQFGNSRR) show a composition bias toward polar residues.

May be involved in MAP kinase activation, epithelial sodium channel (ENaC) down-regulation and cell cycling. This Rattus norvegicus (Rat) protein is Arginine vasopressin-induced protein 1 (Avpi1).